The following is a 343-amino-acid chain: Probable dual-specificity RNA methyltransferase RlmN (343 aa).

The active-site Proton acceptor is E90. Residues 96–325 (HEGYATACIS…AEIRYEKGAD (230 aa)) form the Radical SAM core domain. C103 and C330 are disulfide-bonded. [4Fe-4S] cluster is bound by residues C110, C114, and C117. S-adenosyl-L-methionine-binding positions include 157-158 (GE), S189, 212-214 (SLH), and N288. The active-site S-methylcysteine intermediate is C330.

This sequence belongs to the radical SAM superfamily. RlmN family. Requires [4Fe-4S] cluster as cofactor.

The protein localises to the cytoplasm. The enzyme catalyses adenosine(2503) in 23S rRNA + 2 reduced [2Fe-2S]-[ferredoxin] + 2 S-adenosyl-L-methionine = 2-methyladenosine(2503) in 23S rRNA + 5'-deoxyadenosine + L-methionine + 2 oxidized [2Fe-2S]-[ferredoxin] + S-adenosyl-L-homocysteine. It carries out the reaction adenosine(37) in tRNA + 2 reduced [2Fe-2S]-[ferredoxin] + 2 S-adenosyl-L-methionine = 2-methyladenosine(37) in tRNA + 5'-deoxyadenosine + L-methionine + 2 oxidized [2Fe-2S]-[ferredoxin] + S-adenosyl-L-homocysteine. Functionally, specifically methylates position 2 of adenine 2503 in 23S rRNA and position 2 of adenine 37 in tRNAs. The sequence is that of Probable dual-specificity RNA methyltransferase RlmN from Pseudothermotoga lettingae (strain ATCC BAA-301 / DSM 14385 / NBRC 107922 / TMO) (Thermotoga lettingae).